Consider the following 307-residue polypeptide: tRNA dimethylallyltransferase 2 (307 aa).

An ATP-binding site is contributed by 9–16 (GPTAVGKT). 11 to 16 (TAVGKT) contributes to the substrate binding site. The interval 34 to 37 (DSRQ) is interaction with substrate tRNA.

Belongs to the IPP transferase family. In terms of assembly, monomer. Requires Mg(2+) as cofactor.

It carries out the reaction adenosine(37) in tRNA + dimethylallyl diphosphate = N(6)-dimethylallyladenosine(37) in tRNA + diphosphate. Its function is as follows. Catalyzes the transfer of a dimethylallyl group onto the adenine at position 37 in tRNAs that read codons beginning with uridine, leading to the formation of N6-(dimethylallyl)adenosine (i(6)A). The protein is tRNA dimethylallyltransferase 2 of Azobacteroides pseudotrichonymphae genomovar. CFP2.